The chain runs to 138 residues: Acidic phospholipase A2 Cvv-E6f (138 aa).

A signal peptide spans 1-16 (MRTLWIVAVLLLGVEG). 7 disulfide bridges follow: Cys-42–Cys-131, Cys-44–Cys-60, Cys-59–Cys-111, Cys-65–Cys-138, Cys-66–Cys-104, Cys-73–Cys-97, and Cys-91–Cys-102. 3 residues coordinate Ca(2+): Tyr-43, Gly-45, and Gly-47. His-63 is an active-site residue. Asp-64 is a Ca(2+) binding site. Asp-105 is an active-site residue.

Ca(2+) serves as cofactor. As to expression, expressed by the venom gland.

It is found in the secreted. It catalyses the reaction a 1,2-diacyl-sn-glycero-3-phosphocholine + H2O = a 1-acyl-sn-glycero-3-phosphocholine + a fatty acid + H(+). Snake venom phospholipase A2 (PLA2) that shows very low inhibition of ADP-induced platelet aggregation in platelet-rich plasma of human, rabbit and guinea pig. In vivo, shows efficient edema-inducing activities in rat paws. PLA2 catalyzes the calcium-dependent hydrolysis of the 2-acyl groups in 3-sn-phosphoglycerides. This chain is Acidic phospholipase A2 Cvv-E6f, found in Crotalus viridis viridis (Prairie rattlesnake).